We begin with the raw amino-acid sequence, 483 residues long: Succinate semialdehyde dehydrogenase (483 aa).

Residues 156 to 157, 180 to 183, and 233 to 234 contribute to the NAD(+) site; these read WN, KPAP, and GS. Catalysis depends on Glu255, which acts as the Proton acceptor. An NAD(+)-binding site is contributed by Leu256. The active-site Nucleophile is Cys289. Glu386 provides a ligand contact to NAD(+).

It belongs to the aldehyde dehydrogenase family. Homotetramer.

The enzyme catalyses succinate semialdehyde + NAD(+) + H2O = succinate + NADH + 2 H(+). Functionally, involved in the degradation of the pyridine ring of trigonelline (TG; N-methylnicotinate) into succinate and methylamine as carbon and nitrogen sources, respectively. Catalyzes the NAD(+)-dependent oxidation of succinate semialdehyde to succinate. This is Succinate semialdehyde dehydrogenase from Acinetobacter baylyi (strain ATCC 33305 / BD413 / ADP1).